The chain runs to 497 residues: Sestrin homolog (497 aa).

2 positions are modified to phosphoserine: Ser185 and Ser190. Over residues 226–241 (NANPDYDSQTAASSNG) the composition is skewed to polar residues. Residues 226–255 (NANPDYDSQTAASSNGGAPPDSANAVADGP) are disordered.

Belongs to the sestrin family. Associates with the GATOR2 complex; the interaction is probably direct. Associates with the GATOR1 complex; the interaction is probably indirect and mediated by the GATOR2 complex. Highly expressed in muscle-enriched tissues (at protein level).

The protein localises to the nucleus. It localises to the cytoplasm. In terms of biological role, functions as a negative feedback regulator of mTOR function. The protein is Sestrin homolog of Drosophila melanogaster (Fruit fly).